A 142-amino-acid chain; its full sequence is Large ribosomal subunit protein uL11 (142 aa).

The protein belongs to the universal ribosomal protein uL11 family. As to quaternary structure, part of the ribosomal stalk of the 50S ribosomal subunit. Interacts with L10 and the large rRNA to form the base of the stalk. L10 forms an elongated spine to which L12 dimers bind in a sequential fashion forming a multimeric L10(L12)X complex. One or more lysine residues are methylated.

In terms of biological role, forms part of the ribosomal stalk which helps the ribosome interact with GTP-bound translation factors. The chain is Large ribosomal subunit protein uL11 from Shewanella piezotolerans (strain WP3 / JCM 13877).